Consider the following 222-residue polypeptide: C-reactive protein (222 aa).

The signal sequence occupies residues 1 to 19; it reads MEKLSLCLLVIISLSNAFA. Gln-20 carries the post-translational modification Pyrrolidone carboxylic acid. The Pentraxin (PTX) domain occupies 24 to 222; sequence IGKAFVFPKE…EVYVKPQLWP (199 aa). A disulfide bridge links Cys-55 with Cys-113. Residues Asn-78, Glu-154, Gln-155, Asp-156, and Gln-166 each coordinate Ca(2+).

This sequence belongs to the pentraxin family. As to quaternary structure, homopentamer. Pentraxin (or pentaxin) have a discoid arrangement of 5 non-covalently bound subunits. Interacts with FCN1; may regulate monocyte activation by FCN1. It depends on Ca(2+) as a cofactor. As to expression, found in plasma.

It is found in the secreted. In terms of biological role, displays several functions associated with host defense: it promotes agglutination, bacterial capsular swelling, phagocytosis and complement fixation through its calcium-dependent binding to phosphorylcholine. Can interact with DNA and histones and may scavenge nuclear material released from damaged circulating cells. The polypeptide is C-reactive protein (CRP) (Sus scrofa (Pig)).